A 1141-amino-acid polypeptide reads, in one-letter code: Serine-aspartate repeat-containing protein E (1141 aa).

Positions Met1 to Ala52 are cleaved as a signal peptide. Positions Phe23–Ser34 match the YSIRK-G/S signaling motif motif. The interval Ala53 to Lys601 is ligand binding A region. The disordered stretch occupies residues Glu54 to Glu225. Over residues Ala61–Val75 the composition is skewed to basic and acidic residues. Low complexity predominate over residues Glu77–Asn90. Positions Ile92–Thr109 are enriched in basic and acidic residues. Over residues Lys110–Thr126 the composition is skewed to low complexity. Residues Asn130 to Thr145 show a composition bias toward basic and acidic residues. The span at Pro158–Thr207 shows a compositional bias: polar residues. Basic and acidic residues predominate over residues Ser216–Glu225. CNA-B domains are found at residues Leu602–Pro714, Lys715–Pro824, and Lys825–Thr935. The segment at Val899 to Ala1117 is disordered. Composition is skewed to acidic residues over residues Thr903–Glu913 and Tyr930–Ser1080. The LPXTG sorting signal motif lies at Leu1104–Gly1108. At Thr1107 the chain carries Pentaglycyl murein peptidoglycan amidated threonine. The propeptide at Gly1108 to Lys1141 is removed by sortase.

It belongs to the serine-aspartate repeat-containing protein (SDr) family. In terms of assembly, interacts with host complement factor H/CFAH (via C-terminus). Interacts with host complement regulator C4BPA.

The protein resides in the secreted. It localises to the cell wall. Functionally, cell surface-associated calcium-binding protein which plays an important role in adhesion and pathogenesis. Contributes to the resistance to killing by innate immune components in blood and thus attenuates bacterial clearance by interacting with host complement factor H/CFAH and modulating its activity. Also inhibits bacterial opsonization and killing by interacting with host complement regulator C4BPA and thus inhibiting classical complement pathway activation. The protein is Serine-aspartate repeat-containing protein E (sdrE) of Staphylococcus aureus (strain MSSA476).